Reading from the N-terminus, the 367-residue chain is Metacaspase-1 (367 aa).

The segment at 47–77 (DPRTAPPPQPSSAPSPPPQIHAPPGQLPHPH) is disordered. Pro residues predominate over residues 50–73 (TAPPPQPSSAPSPPPQIHAPPGQL). Residues His164 and Cys220 contribute to the active site.

The protein belongs to the peptidase C14B family. In terms of assembly, interacts (via N-terminus) with LSD1. Proteolytically processed; by an autocatalytic mechanism.

Cysteine protease that cleaves specifically after arginine or lysine residues. Does not cleave caspase-specific substrates. Acts as a positive regulator of cell death. Required for both oxidative stress cell death response and hypersensitive cell death response mediated by immune response. The polypeptide is Metacaspase-1 (AMC1) (Arabidopsis thaliana (Mouse-ear cress)).